We begin with the raw amino-acid sequence, 387 residues long: Dynactin subunit 2 (387 aa).

Coiled coils occupy residues 99-125 (LQRC…DTGR), 256-282 (SQLD…SNAT), and 355-387 (TGVQ…QMIK).

This sequence belongs to the dynactin subunit 2 family. As to quaternary structure, subunit of dynactin, a multiprotein complex associated with dynein.

It is found in the cytoplasm. Its subcellular location is the cytoskeleton. The protein localises to the membrane. In terms of biological role, modulates cytoplasmic dynein binding to an organelle, and plays a role in prometaphase chromosome alignment and spindle organization during mitosis. This Anopheles gambiae (African malaria mosquito) protein is Dynactin subunit 2.